Consider the following 477-residue polypeptide: Fibrinogen beta chain (477 aa).

Positions 1–76 (EDLSLVGQPE…ASPRPQEAQK (76 aa)) are disordered. Sulfotyrosine is present on Tyr13. Residue Asn27 is glycosylated (N-linked (GlcNAc...) asparagine). Basic residues predominate over residues 44–55 (RVRRPPLRHRRL). 3 cysteine pairs are disulfide-bonded: Cys220/Cys304, Cys230/Cys259, and Cys412/Cys425. The Fibrinogen C-terminal domain maps to 221–476 (RVPVVSGMHC…QMAMKLRPKW (256 aa)).

In terms of assembly, heterohexamer; disulfide linked. Contains 2 sets of 3 non-identical chains (alpha, beta and gamma). The 2 heterotrimers are in head to head conformation with the N-termini in a small central domain. Conversion of fibrinogen to fibrin is triggered by thrombin, which cleaves fibrinopeptides A and B from alpha and beta chains, and thus exposes the N-terminal polymerization sites responsible for the formation of the soft clot. The soft clot is converted into the hard clot by factor XIIIA which catalyzes the epsilon-(gamma-glutamyl)lysine cross-linking between gamma chains (stronger) and between alpha chains (weaker) of different monomers.

It localises to the secreted. Its function is as follows. Fibrinogen has a double function: yielding monomers that polymerize into fibrin and acting as a cofactor in platelet aggregation. This Petromyzon marinus (Sea lamprey) protein is Fibrinogen beta chain.